A 212-amino-acid polypeptide reads, in one-letter code: Pyridoxine/pyridoxamine 5'-phosphate oxidase (212 aa).

Residues 8-11 (RREY) and Lys66 contribute to the substrate site. Residues 61–66 (RIVLLK), 76–77 (FT), Arg82, Lys83, and Gln105 each bind FMN. Substrate-binding residues include Tyr123, Arg127, and Ser131. Residues 140-141 (QS) and Trp185 each bind FMN. 191–193 (RLH) is a substrate binding site. Arg195 serves as a coordination point for FMN.

This sequence belongs to the pyridoxamine 5'-phosphate oxidase family. In terms of assembly, homodimer. Requires FMN as cofactor.

It carries out the reaction pyridoxamine 5'-phosphate + O2 + H2O = pyridoxal 5'-phosphate + H2O2 + NH4(+). It catalyses the reaction pyridoxine 5'-phosphate + O2 = pyridoxal 5'-phosphate + H2O2. It participates in cofactor metabolism; pyridoxal 5'-phosphate salvage; pyridoxal 5'-phosphate from pyridoxamine 5'-phosphate: step 1/1. The protein operates within cofactor metabolism; pyridoxal 5'-phosphate salvage; pyridoxal 5'-phosphate from pyridoxine 5'-phosphate: step 1/1. Functionally, catalyzes the oxidation of either pyridoxine 5'-phosphate (PNP) or pyridoxamine 5'-phosphate (PMP) into pyridoxal 5'-phosphate (PLP). The chain is Pyridoxine/pyridoxamine 5'-phosphate oxidase from Shewanella putrefaciens (strain CN-32 / ATCC BAA-453).